Reading from the N-terminus, the 295-residue chain is Bifunctional protein FolD (295 aa).

NADP(+)-binding positions include G166–S168, S191, and I232.

Belongs to the tetrahydrofolate dehydrogenase/cyclohydrolase family. Homodimer.

It carries out the reaction (6R)-5,10-methylene-5,6,7,8-tetrahydrofolate + NADP(+) = (6R)-5,10-methenyltetrahydrofolate + NADPH. The catalysed reaction is (6R)-5,10-methenyltetrahydrofolate + H2O = (6R)-10-formyltetrahydrofolate + H(+). The protein operates within one-carbon metabolism; tetrahydrofolate interconversion. In terms of biological role, catalyzes the oxidation of 5,10-methylenetetrahydrofolate to 5,10-methenyltetrahydrofolate and then the hydrolysis of 5,10-methenyltetrahydrofolate to 10-formyltetrahydrofolate. In Rhodopseudomonas palustris (strain BisA53), this protein is Bifunctional protein FolD.